The following is an 89-amino-acid chain: Large ribosomal subunit protein bL27 (89 aa).

Residues 1 to 22 (MAHKKAGGSSRNGRDSAGRRLG) form a disordered region.

The protein belongs to the bacterial ribosomal protein bL27 family.

The chain is Large ribosomal subunit protein bL27 from Dinoroseobacter shibae (strain DSM 16493 / NCIMB 14021 / DFL 12).